A 96-amino-acid chain; its full sequence is Putative pterin-4-alpha-carbinolamine dehydratase (96 aa).

This sequence belongs to the pterin-4-alpha-carbinolamine dehydratase family.

The enzyme catalyses (4aS,6R)-4a-hydroxy-L-erythro-5,6,7,8-tetrahydrobiopterin = (6R)-L-erythro-6,7-dihydrobiopterin + H2O. This chain is Putative pterin-4-alpha-carbinolamine dehydratase, found in Prochlorococcus marinus (strain MIT 9515).